A 544-amino-acid chain; its full sequence is Sphingosine-1-phosphate lyase (544 aa).

Residues 1–29 lie on the Lumenal side of the membrane; the sequence is MDSFSYSSMKSMLIQARGSLNSRLSEFEP. The chain crosses the membrane as a helical; Signal-anchor for type III membrane protein span at residues 30–50; it reads LVLLLVPLVSLFLAQIIGSVF. The Cytoplasmic portion of the chain corresponds to 51-544; the sequence is GVVHEKGLKA…LLVSFMDSQY (494 aa). The residue at position 349 (lysine 349) is an N6-(pyridoxal phosphate)lysine.

Belongs to the group II decarboxylase family. Sphingosine-1-phosphate lyase subfamily. The cofactor is pyridoxal 5'-phosphate. As to expression, expressed in the peripheral parts of leaves and the bases of trichomes.

It is found in the endoplasmic reticulum membrane. The catalysed reaction is sphinganine 1-phosphate = hexadecanal + phosphoethanolamine. It functions in the pathway lipid metabolism; sphingolipid metabolism. Cleaves phosphorylated sphingoid bases (PSBs), such as sphingosine-1-phosphate, into fatty aldehydes and phosphoethanolamine. May play a minor role in maintenance of sphingolipid metabolism during normal plant development and growth, but be required for maintaining sphingoid long chain bases (LCB) and their phosphorylated derivatives (LCB-P) levels when sphingolipid metabolism is perturbed. May play a role in dehydration stress. This is Sphingosine-1-phosphate lyase (DPL1) from Arabidopsis thaliana (Mouse-ear cress).